The chain runs to 152 residues: ESAT-6 secretion machinery protein EssA (152 aa).

Residues 1-114 are Cytoplasmic-facing; that stretch reads MLMNSVIALT…PYIQNKQEKK (114 aa). The disordered stretch occupies residues 62–83; that stretch reads ERQQQIKNDMFQNQASHSTRLN. Over residues 66-80 the composition is skewed to polar residues; the sequence is QIKNDMFQNQASHST. Residues 115-135 traverse the membrane as a helical segment; that stretch reads IFPYILMSVGAFLTLGFVIFS. The Extracellular portion of the chain corresponds to 136 to 152; it reads IHKGRRTKNESARKSNI.

The protein belongs to the EssA family.

The protein resides in the cell membrane. Component of the ESAT-6 secretion system (Ess). Required for the secretion of EsxA and EsxB. The polypeptide is ESAT-6 secretion machinery protein EssA (Staphylococcus aureus (strain COL)).